Consider the following 563-residue polypeptide: Arginine--tRNA ligase (563 aa).

The short motif at 121-131 (PNIAKPFSIGH) is the 'HIGH' region element.

This sequence belongs to the class-I aminoacyl-tRNA synthetase family. As to quaternary structure, monomer.

It is found in the cytoplasm. The catalysed reaction is tRNA(Arg) + L-arginine + ATP = L-arginyl-tRNA(Arg) + AMP + diphosphate. This chain is Arginine--tRNA ligase, found in Streptococcus pneumoniae (strain CGSP14).